Reading from the N-terminus, the 393-residue chain is UDP-galactose translocator (393 aa).

10 consecutive transmembrane segments (helical) span residues 3 to 23 (AVGS…AGAL), 37 to 57 (YISL…IRYA), 65 to 85 (FFAT…CLLL), 97 to 117 (LVLF…KLAV), 140 to 160 (TFQV…VLML), 169 to 189 (WASL…QAGG), 200 to 220 (GVGL…GVYF), 238 to 258 (LGLF…GTAV), 269 to 289 (PAVW…AVVV), and 315 to 335 (LFGF…IGAV). The tract at residues 353–393 (APTSGPCTHQQPPGQPPPPQLSSHHGDLSTEPFLPKSVLVK) is disordered.

The protein belongs to the nucleotide-sugar transporter family. SLC35A subfamily. As to quaternary structure, interacts with SLC35A3; the interaction is reduced in the presence of SLC35A4. Found in a complex with SLC35A3 and SLC35A4.

Its subcellular location is the golgi apparatus membrane. It carries out the reaction UMP(out) + UDP-alpha-D-galactose(in) = UMP(in) + UDP-alpha-D-galactose(out). The catalysed reaction is UDP-N-acetyl-alpha-D-galactosamine(in) + UMP(out) = UDP-N-acetyl-alpha-D-galactosamine(out) + UMP(in). It catalyses the reaction UMP(out) + UDP-alpha-D-glucose(in) = UMP(in) + UDP-alpha-D-glucose(out). The enzyme catalyses UMP(out) + UDP-N-acetyl-alpha-D-glucosamine(in) = UMP(in) + UDP-N-acetyl-alpha-D-glucosamine(out). It carries out the reaction UDP-alpha-D-galactose(in) + AMP(out) = UDP-alpha-D-galactose(out) + AMP(in). The catalysed reaction is UDP-alpha-D-galactose(in) + CMP(out) = UDP-alpha-D-galactose(out) + CMP(in). It catalyses the reaction UDP-N-acetyl-alpha-D-galactosamine(out) + UDP-alpha-D-galactose(in) = UDP-N-acetyl-alpha-D-galactosamine(in) + UDP-alpha-D-galactose(out). The enzyme catalyses UDP-N-acetyl-alpha-D-glucosamine(out) + UDP-alpha-D-galactose(in) = UDP-N-acetyl-alpha-D-glucosamine(in) + UDP-alpha-D-galactose(out). It carries out the reaction UDP-alpha-D-galactose(in) + UDP-alpha-D-glucose(out) = UDP-alpha-D-galactose(out) + UDP-alpha-D-glucose(in). The catalysed reaction is UMP(out) + CMP(in) = UMP(in) + CMP(out). It catalyses the reaction UMP(out) + AMP(in) = UMP(in) + AMP(out). In terms of biological role, transports uridine diphosphate galactose (UDP-galactose) from the cytosol into the Golgi apparatus, functioning as an antiporter that exchanges UDP-galactose for UMP. It is also able to exchange UDP-galactose for AMP and CMP, and to transport UDP-N-acetylgalactosamine (UDP-GalNAc) and other nucleotide sugars. As a provider of UDP-galactose to galactosyltransferases present in the Golgi apparatus, it is necessary for globotriaosylceramide/globoside (Gb3Cer) synthesis from lactosylceramide. This chain is UDP-galactose translocator, found in Bos taurus (Bovine).